A 269-amino-acid polypeptide reads, in one-letter code: MNQMNPAFVMPDVQSTVDTRQIPIQRVGVKAVRHPLTVCTESGDVQPTVGVWNLDVRLPADQKGTHMSRFVALLEENRAPLTVERFRAMLASMLVKLEAEAGRIEVTFPYFVNKTAPVSGVQSLLDYEVTLAGESRNGDTRLFLKVLVPVTSLCPCSKKISQYGAHNQRSHVTIDAELAADLPVEALIRIAEEEASCELWGLLKRPDEKFVTERAYENPKFVEDLVRDVAQRLDADERVVAYVLEAENFESIHNHSAYALIERDKRQAA.

Belongs to the GTP cyclohydrolase IV family.

It catalyses the reaction GTP + H2O = 7,8-dihydroneopterin 3'-triphosphate + formate + H(+). It participates in cofactor biosynthesis; 7,8-dihydroneopterin triphosphate biosynthesis; 7,8-dihydroneopterin triphosphate from GTP: step 1/1. Converts GTP to 7,8-dihydroneopterin triphosphate. This is GTP cyclohydrolase FolE2 1 from Burkholderia cenocepacia (strain HI2424).